A 249-amino-acid polypeptide reads, in one-letter code: ATP synthase subunit a (249 aa).

The next 6 helical transmembrane spans lie at 30-50 (QSPV…YVGM), 86-106 (FFPF…LGLL), 115-135 (HIAV…IVSL), 142-162 (FFAH…LVPI), 191-211 (MFAA…VLAV), and 218-238 (VALM…FAIL).

It belongs to the ATPase A chain family. As to quaternary structure, F-type ATPases have 2 components, CF(1) - the catalytic core - and CF(0) - the membrane proton channel. CF(1) has five subunits: alpha(3), beta(3), gamma(1), delta(1), epsilon(1). CF(0) has three main subunits: a(1), b(2) and c(9-12). The alpha and beta chains form an alternating ring which encloses part of the gamma chain. CF(1) is attached to CF(0) by a central stalk formed by the gamma and epsilon chains, while a peripheral stalk is formed by the delta and b chains.

Its subcellular location is the cell inner membrane. Functionally, key component of the proton channel; it plays a direct role in the translocation of protons across the membrane. The chain is ATP synthase subunit a from Gluconacetobacter diazotrophicus (strain ATCC 49037 / DSM 5601 / CCUG 37298 / CIP 103539 / LMG 7603 / PAl5).